A 330-amino-acid polypeptide reads, in one-letter code: D-lactate dehydrogenase (330 aa).

Residues 156–157 (RI), aspartate 176, 206–207 (VP), 233–235 (AAR), and aspartate 259 each bind NAD(+). Residue arginine 235 is part of the active site. The active site involves glutamate 264. Histidine 296 functions as the Proton donor in the catalytic mechanism.

This sequence belongs to the D-isomer specific 2-hydroxyacid dehydrogenase family.

It carries out the reaction (R)-lactate + NAD(+) = pyruvate + NADH + H(+). The polypeptide is D-lactate dehydrogenase (ldhD) (Staphylococcus aureus (strain MSSA476)).